A 50-amino-acid polypeptide reads, in one-letter code: Basic phospholipase A2 Bmaj-9 (50 aa).

3 residues coordinate Ca(2+): tyrosine 27, glycine 29, and glycine 31. An intrachain disulfide couples cysteine 28 to cysteine 45. The active site involves histidine 48. Position 49 (aspartate 49) interacts with Ca(2+).

Belongs to the phospholipase A2 family. Group II subfamily. D49 sub-subfamily. Ca(2+) is required as a cofactor. As to expression, expressed by the venom gland.

The protein resides in the secreted. It carries out the reaction a 1,2-diacyl-sn-glycero-3-phosphocholine + H2O = a 1-acyl-sn-glycero-3-phosphocholine + a fatty acid + H(+). Functionally, snake venom phospholipase A2 (PLA2) that causes irreversible neuromuscular blockade in chick biventer cervicis muscle preparations. The neuromuscular blockade is mediated by inhibitory action at the presynaptic motor nerve endings. PLA2 catalyzes the calcium-dependent hydrolysis of the 2-acyl groups in 3-sn-phosphoglycerides. This Bothrops marajoensis (Marajo lancehead) protein is Basic phospholipase A2 Bmaj-9.